Here is a 186-residue protein sequence, read N- to C-terminus: Ribosome-recycling factor (186 aa).

It belongs to the RRF family.

The protein resides in the cytoplasm. Its function is as follows. Responsible for the release of ribosomes from messenger RNA at the termination of protein biosynthesis. May increase the efficiency of translation by recycling ribosomes from one round of translation to another. This Chelativorans sp. (strain BNC1) protein is Ribosome-recycling factor.